A 79-amino-acid polypeptide reads, in one-letter code: MKSLVIVFVVLLGVAMISANEEELLAILQDQRNDARGGCVNKYKRNICGTLVTPMNCIAPRTRMGKFARRFCKFMCGFC.

Positions 1–19 (MKSLVIVFVVLLGVAMISA) are cleaved as a signal peptide. A propeptide spanning residues 20–36 (NEEELLAILQDQRNDAR) is cleaved from the precursor.

It belongs to the sea anemone 8 toxin family.

Its subcellular location is the secreted. The protein localises to the nematocyst. In Anemonia viridis (Snakelocks anemone), this protein is U-actitoxin-Avd8b.